The primary structure comprises 344 residues: N-acetyl-gamma-glutamyl-phosphate reductase (344 aa).

Residue cysteine 150 is part of the active site.

This sequence belongs to the NAGSA dehydrogenase family. Type 1 subfamily.

It is found in the cytoplasm. The catalysed reaction is N-acetyl-L-glutamate 5-semialdehyde + phosphate + NADP(+) = N-acetyl-L-glutamyl 5-phosphate + NADPH + H(+). It functions in the pathway amino-acid biosynthesis; L-arginine biosynthesis; N(2)-acetyl-L-ornithine from L-glutamate: step 3/4. Functionally, catalyzes the NADPH-dependent reduction of N-acetyl-5-glutamyl phosphate to yield N-acetyl-L-glutamate 5-semialdehyde. The polypeptide is N-acetyl-gamma-glutamyl-phosphate reductase (Pseudomonas fluorescens (strain Pf0-1)).